We begin with the raw amino-acid sequence, 136 residues long: Large ribosomal subunit protein uL16 (136 aa).

The protein belongs to the universal ribosomal protein uL16 family. In terms of assembly, part of the 50S ribosomal subunit.

Its function is as follows. Binds 23S rRNA and is also seen to make contacts with the A and possibly P site tRNAs. The chain is Large ribosomal subunit protein uL16 from Pasteurella multocida (strain Pm70).